Consider the following 94-residue polypeptide: DNA-binding protein HU (94 aa).

Positions 55-94 (RAERPGRNPKTGEPIMIAASNNPSFKPGKALKDAVKSSAG) are disordered. A compositionally biased stretch (basic and acidic residues) spans 84-94 (ALKDAVKSSAG).

Belongs to the bacterial histone-like protein family.

In terms of biological role, histone-like DNA-binding protein which is capable of wrapping DNA to stabilize it, and thus to prevent its denaturation under extreme environmental conditions. This chain is DNA-binding protein HU (hup), found in Xylella fastidiosa (strain Temecula1 / ATCC 700964).